The following is a 74-amino-acid chain: ATP synthase subunit c (74 aa).

2 consecutive transmembrane segments (helical) span residues 8–28 (FIGV…VSNI) and 52–72 (IGAG…MLLI).

It belongs to the ATPase C chain family. As to quaternary structure, F-type ATPases have 2 components, F(1) - the catalytic core - and F(0) - the membrane proton channel. F(1) has five subunits: alpha(3), beta(3), gamma(1), delta(1), epsilon(1). F(0) has three main subunits: a(1), b(2) and c(10-14). The alpha and beta chains form an alternating ring which encloses part of the gamma chain. F(1) is attached to F(0) by a central stalk formed by the gamma and epsilon chains, while a peripheral stalk is formed by the delta and b chains.

Its subcellular location is the cell inner membrane. In terms of biological role, f(1)F(0) ATP synthase produces ATP from ADP in the presence of a proton or sodium gradient. F-type ATPases consist of two structural domains, F(1) containing the extramembraneous catalytic core and F(0) containing the membrane proton channel, linked together by a central stalk and a peripheral stalk. During catalysis, ATP synthesis in the catalytic domain of F(1) is coupled via a rotary mechanism of the central stalk subunits to proton translocation. Key component of the F(0) channel; it plays a direct role in translocation across the membrane. A homomeric c-ring of between 10-14 subunits forms the central stalk rotor element with the F(1) delta and epsilon subunits. The chain is ATP synthase subunit c from Rickettsia canadensis (strain McKiel).